The chain runs to 147 residues: Hemoglobin subunit epsilon (147 aa).

Positions 3-147 (HFTAEEKAAI…VAIALGHKYH (145 aa)) constitute a Globin domain. Ser14 and Ser51 each carry phosphoserine. Residues His64 and His93 each contribute to the heme b site.

This sequence belongs to the globin family. In terms of assembly, heterotetramer of two alpha chains and two epsilon chains in early embryonic hemoglobin Gower-2; two zeta chains and two epsilon chains in early embryonic hemoglobin Gower-1. Red blood cells.

Its function is as follows. The epsilon chain is a beta-type chain of early mammalian embryonic hemoglobin. This chain is Hemoglobin subunit epsilon (HBE1), found in Callithrix jacchus (White-tufted-ear marmoset).